Consider the following 362-residue polypeptide: Protein RecA (362 aa).

ATP is bound at residue 77-84 (GPESSGKT).

The protein belongs to the RecA family.

It is found in the cytoplasm. Can catalyze the hydrolysis of ATP in the presence of single-stranded DNA, the ATP-dependent uptake of single-stranded DNA by duplex DNA, and the ATP-dependent hybridization of homologous single-stranded DNAs. It interacts with LexA causing its activation and leading to its autocatalytic cleavage. This Allorhizobium ampelinum (strain ATCC BAA-846 / DSM 112012 / S4) (Agrobacterium vitis (strain S4)) protein is Protein RecA.